The chain runs to 886 residues: Vam6/Vps39-like protein (886 aa).

The CNH domain occupies 15–294 (PLQIDCLAAW…RFITSGGSNI (280 aa)). One copy of the CHCR repeat lies at 573 to 750 (FTEDLPEVES…LLRMYLSPPS (178 aa)).

Belongs to the VAM6/VPS39 family. Homooligomer. Interacts with TGFBR2 and, less efficiently, with TGFBR1; interaction with TGFBR2 is independent of the receptor kinase activity and of the presence of TGF-beta. Also interacts with ACVR2B, but not with BMPR2. Interacts with SMAD4, preferentially following TGF-beta treatment. Does not interact with SAMD2 or SMAD3. Component of the homotypic fusion and vacuole protein sorting (HOPS) complex; the core of which composed of the class C Vps proteins VPS11, VPS16, VPS18 and VPS33A, is associated with VPS39 and VPS41. Interacts with PLEKHM2; involved in VPS39 recruitment to ARL8B-containing lysosomes. Associates with adapter protein complex 3 (AP-3) and clathrin:AP-3 complexes. Interacts with STX17; this interaction is increased in the absence of TMEM39A. Interacts with RAB7, RAB2A and RAB2B. Interacts with RAB2A (GTP-bound); the interaction contributes to obtaining a functional HOPS complex that promotes autophagosome-lysosome membrane fusion driven by STX17-SNAP29-VAMP8. Interacts with RAB39A (GTP-bound) and RAB39B (GTP-bound); interaction with RAB39A contributes to obtaining a functional HOPS complex. As to quaternary structure, (Microbial infection) Interacts with SARS coronavirus-2/SARS-CoV-2 ORF3A protein; the interaction is direct and sequestrates VPS39, thereby preventing HOPS complex from interacting with the autophagosomal SNARE protein STX17. ORF3A enhances the interaction of VPS39 with VPS11 and VPS18, while its interaction with the VPS16:VPS33A module is attenuated. As to expression, widely expressed, with highest levels in heart, skeletal muscle, kidney, pancreas, brain, placenta and spleen.

Its subcellular location is the cytoplasm. The protein localises to the lysosome membrane. It is found in the late endosome membrane. Functionally, regulator of TGF-beta/activin signaling, inhibiting SMAD3- and activating SMAD2-dependent transcription. Acts by interfering with SMAD3/SMAD4 complex formation, this would lead to inhibition of SMAD3-dependent transcription and relieve SMAD3 inhibition of SMAD2-dependent promoters, thus increasing SMAD2-dependent transcription. Does not affect TGF-beta-induced SMAD2 or SMAD3 phosphorylation, nor SMAD2/SMAD4 complex formation. Its function is as follows. Plays a role in vesicle-mediated protein trafficking to lysosomal compartments including the endocytic membrane transport and autophagic pathways. Acts as a component of the HOPS endosomal tethering complex. This complex is proposed to be involved in the Rab5-to-Rab7 endosome conversion probably implicating MON1A/B, and via binding SNAREs and SNARE complexes to mediate tethering and docking events during SNARE-mediated membrane fusion. The HOPS complex is proposed to be recruited to Rab7 on the late endosomal membrane and to regulate late endocytic, phagocytic and autophagic traffic towards lysosomes. Involved in homotypic vesicle fusions between late endosomes and in heterotypic fusions between late endosomes and lysosomes. Required for fusion of endosomes and autophagosomes with lysosomes. The chain is Vam6/Vps39-like protein from Homo sapiens (Human).